The primary structure comprises 201 residues: Recombination protein RecR (201 aa).

A C4-type zinc finger spans residues 57 to 72; it reads CADCRTFTEQEHCTIC. The region spanning 81 to 176 is the Toprim domain; it reads GQICVVESPA…LASRIAHGVP (96 aa).

This sequence belongs to the RecR family.

Functionally, may play a role in DNA repair. It seems to be involved in an RecBC-independent recombinational process of DNA repair. It may act with RecF and RecO. The chain is Recombination protein RecR from Yersinia pestis bv. Antiqua (strain Antiqua).